We begin with the raw amino-acid sequence, 378 residues long: Bifunctional enzyme IspD/IspF (378 aa).

The tract at residues 1 to 222 (MTETVAIIVA…RLLSPTGAPR (222 aa)) is 2-C-methyl-D-erythritol 4-phosphate cytidylyltransferase. A 2-C-methyl-D-erythritol 2,4-cyclodiphosphate synthase region spans residues 222–378 (RIGKGYDVHE…EAVALLMPKG (157 aa)). D228 and H230 together coordinate a divalent metal cation. 4-CDP-2-C-methyl-D-erythritol 2-phosphate-binding positions include 228 to 230 (DVH) and 254 to 255 (HS). Residue H262 participates in a divalent metal cation binding. 4-CDP-2-C-methyl-D-erythritol 2-phosphate-binding positions include 276-278 (DIG), 352-355 (TTTE), F359, and R362.

The protein in the N-terminal section; belongs to the IspD/TarI cytidylyltransferase family. IspD subfamily. This sequence in the C-terminal section; belongs to the IspF family. A divalent metal cation is required as a cofactor.

The enzyme catalyses 2-C-methyl-D-erythritol 4-phosphate + CTP + H(+) = 4-CDP-2-C-methyl-D-erythritol + diphosphate. It catalyses the reaction 4-CDP-2-C-methyl-D-erythritol 2-phosphate = 2-C-methyl-D-erythritol 2,4-cyclic diphosphate + CMP. It functions in the pathway isoprenoid biosynthesis; isopentenyl diphosphate biosynthesis via DXP pathway; isopentenyl diphosphate from 1-deoxy-D-xylulose 5-phosphate: step 2/6. It participates in isoprenoid biosynthesis; isopentenyl diphosphate biosynthesis via DXP pathway; isopentenyl diphosphate from 1-deoxy-D-xylulose 5-phosphate: step 4/6. Bifunctional enzyme that catalyzes the formation of 4-diphosphocytidyl-2-C-methyl-D-erythritol from CTP and 2-C-methyl-D-erythritol 4-phosphate (MEP) (IspD), and catalyzes the conversion of 4-diphosphocytidyl-2-C-methyl-D-erythritol 2-phosphate (CDP-ME2P) to 2-C-methyl-D-erythritol 2,4-cyclodiphosphate (ME-CPP) with a corresponding release of cytidine 5-monophosphate (CMP) (IspF). This is Bifunctional enzyme IspD/IspF from Hyphomonas neptunium (strain ATCC 15444).